The chain runs to 1075 residues: MNAPTPLPIGLPDYAELHCISNFTFLTGASHPHELVARAQAFGYRALALTDECSVAGTVRAHMAAKEAGLKLIIGSRFTVRDAQGEPWLRLVLLAQDIDGYGNLCECITQARLAAPKGDYRLLADDLAAPAGELAHLRGMPHCLAILLPDYDPDPRHLLAQAQWCRQVFGDRLSMALELPLRHADDRHRGTVAAVSEQTDVPMVATGDVAMHSRQRKPLHDVLTAIRLSRPIAECGLALAPSAEQAMRTRMQLAFFYQGERGAQVLRRSVELASLCDFSLDEIAYEYPHEVVPEGQTPAGYLLAEVMAGAARRYGKDIPSKVRAQLDEELALIAELRYEPFFLTVYDVVRFARSQSILCQGRGSAANSAVCYCLGITEVNPESGNTLFARFLSRARNEPPDIDVDFEHQRREEVIQYIYKKYGVTRTALAAALITYRTRSALRDVGRALGIDLGVIEQVAKAQAWWDGRHEFAQRAGQQGLDPESPLVQRWAGLIEQLRGFPRHLSQHVGGFVIAQGKLSRLVPIENAAMPERRVIQWDKDDLESLRLLKVDVLALGMLTAIRRTLDMLDALPGRRAHYGAPDKLAMQHLPDEDTATYEMICRAETIGVFQIESRAQQSMLPRLRPRTYYDLVIQVAIVRPGPIQGGMVHPYLQRREAVRNGNPDCVTYPGPEVKAVLERTLGVPIFQEQVMEIAMKAGGFTADEADRLRRDMAAWKRKGNLTQHQARLMKEMVEVRHYDPAFVEALCRQMEGFAEYGFPESHAAGFARLAYVSSFLKCHEPAAFFAALLNSQPMGFYSPSQLVQEARRSRVRVLPADVTASAWDSTLHARPDGAGGQPDIRLGLNRIRGMRPAAGERIVVARAQAPFSSVEDLAHRAALDRHDLSVLAAANALLSLAGHRRQALWQTLALQEPGQDHALLRQARPVEAPLVLPAPSLGEEVVADYGSLGLSLQSHPLSLLRPRLERMRFVTAAALAGYRNGQLARACGIVTVRQRPGTAKGTIFVSIEDETGAVNVVLWPRLIERQRREVLHARLLGVYGKWQCERETRHLVAQHLVDLTPLLGRLASSSRDFH.

The protein belongs to the DNA polymerase type-C family. DnaE2 subfamily.

Its subcellular location is the cytoplasm. The enzyme catalyses DNA(n) + a 2'-deoxyribonucleoside 5'-triphosphate = DNA(n+1) + diphosphate. Functionally, DNA polymerase involved in damage-induced mutagenesis and translesion synthesis (TLS). It is not the major replicative DNA polymerase. In Ralstonia nicotianae (strain ATCC BAA-1114 / GMI1000) (Ralstonia solanacearum), this protein is Error-prone DNA polymerase.